The primary structure comprises 370 residues: Cytochrome b (370 aa).

Transmembrane regions (helical) follow at residues 25 to 45 (FGSM…FLAI), 69 to 90 (WIMQ…YIHI), 105 to 125 (WLSG…GYVL), and 170 to 190 (FFAL…IHII). Positions 75 and 89 each coordinate heme b. Residues His174 and His188 each coordinate heme b. His193 is an a ubiquinone binding site. Transmembrane regions (helical) follow at residues 218-238 (YKDM…MSFT), 280-300 (LGGT…PFTH), 312-332 (LTQI…WTAT), and 339-358 (FISI…IINP).

It belongs to the cytochrome b family. As to quaternary structure, the cytochrome bc1 complex contains 3 respiratory subunits (MT-CYB, CYC1 and UQCRFS1), 2 core proteins (UQCRC1 and UQCRC2) and probably 6 low-molecular weight proteins. Heme b serves as cofactor.

The protein localises to the mitochondrion inner membrane. Its function is as follows. Component of the ubiquinol-cytochrome c reductase complex (complex III or cytochrome b-c1 complex) that is part of the mitochondrial respiratory chain. The b-c1 complex mediates electron transfer from ubiquinol to cytochrome c. Contributes to the generation of a proton gradient across the mitochondrial membrane that is then used for ATP synthesis. The polypeptide is Cytochrome b (MT-CYB) (Bungarus fasciatus (Banded krait)).